The chain runs to 609 residues: Tyrosyl-DNA phosphodiesterase 1 (609 aa).

The span at 1–12 shows a compositional bias: polar residues; it reads MSQESSYGKWTI. Residues 1 to 154 are disordered; the sequence is MSQESSYGKW…EYETSGEGQD (154 aa). A phosphoserine mark is found at Ser61, Ser119, and Ser132. Over residues 127-143 the composition is skewed to basic and acidic residues; that stretch reads KVEDRSPPDSHRAQRAD. Thr148 is modified (phosphothreonine). Ser149 carries the phosphoserine modification. Residue His264 is the Nucleophile of the active site. Lys266 serves as a coordination point for substrate. Residues 401–404 are interaction with DNA; the sequence is SIGS. His494 serves as the catalytic Proton donor/acceptor. Position 496 (Lys496) interacts with substrate.

It belongs to the tyrosyl-DNA phosphodiesterase family. Monomer.

It is found in the nucleus. The protein resides in the cytoplasm. In terms of biological role, DNA repair enzyme that can remove a variety of covalent adducts from DNA through hydrolysis of a 3'-phosphodiester bond, giving rise to DNA with a free 3' phosphate. Catalyzes the hydrolysis of dead-end complexes between DNA and the topoisomerase I active site tyrosine residue. Hydrolyzes 3'-phosphoglycolates on protruding 3' ends on DNA double-strand breaks due to DNA damage by radiation and free radicals. Acts on blunt-ended double-strand DNA breaks and on single-stranded DNA. Has low 3'exonuclease activity and can remove a single nucleoside from the 3'end of DNA and RNA molecules with 3'hydroxyl groups. Has no exonuclease activity towards DNA or RNA with a 3'phosphate. The protein is Tyrosyl-DNA phosphodiesterase 1 (Tdp1) of Rattus norvegicus (Rat).